The primary structure comprises 164 residues: Putative ankyrin repeat protein RBE_0585 (164 aa).

2 ANK repeats span residues 42-107 and 126-149; these read NQDT…VAIL and DKDT…MLDY.

This is Putative ankyrin repeat protein RBE_0585 from Rickettsia bellii (strain RML369-C).